The chain runs to 142 residues: 3-hydroxyacyl-[acyl-carrier-protein] dehydratase FabZ (142 aa).

H49 is a catalytic residue.

The protein belongs to the thioester dehydratase family. FabZ subfamily.

The protein localises to the cytoplasm. The catalysed reaction is a (3R)-hydroxyacyl-[ACP] = a (2E)-enoyl-[ACP] + H2O. Its function is as follows. Involved in unsaturated fatty acids biosynthesis. Catalyzes the dehydration of short chain beta-hydroxyacyl-ACPs and long chain saturated and unsaturated beta-hydroxyacyl-ACPs. This chain is 3-hydroxyacyl-[acyl-carrier-protein] dehydratase FabZ, found in Deinococcus geothermalis (strain DSM 11300 / CIP 105573 / AG-3a).